The sequence spans 349 residues: Glycosyltransferase 8 domain-containing protein 2 (349 aa).

At 1–6 (MALLRK) the chain is on the cytoplasmic side. The chain crosses the membrane as a helical; Signal-anchor for type II membrane protein span at residues 7 to 24 (INQVLLFLLIVTLCVILY). Residues 25-349 (KKVHKGTVSK…AGIFKLNHHS (325 aa)) lie on the Lumenal side of the membrane. Residue asparagine 234 is glycosylated (N-linked (GlcNAc...) asparagine).

The protein belongs to the glycosyltransferase 8 family.

It localises to the membrane. The chain is Glycosyltransferase 8 domain-containing protein 2 (GLT8D2) from Macaca fascicularis (Crab-eating macaque).